The sequence spans 412 residues: Multifunctional CCA protein (412 aa).

ATP contacts are provided by glycine 8 and arginine 11. 2 residues coordinate CTP: glycine 8 and arginine 11. Mg(2+) contacts are provided by aspartate 21 and aspartate 23. ATP-binding residues include arginine 91, arginine 137, and arginine 140. 3 residues coordinate CTP: arginine 91, arginine 137, and arginine 140. An HD domain is found at 226–327 (TGIHTMMVID…VTLFEKTDAL (102 aa)).

It belongs to the tRNA nucleotidyltransferase/poly(A) polymerase family. Bacterial CCA-adding enzyme type 1 subfamily. Monomer. Can also form homodimers and oligomers. Mg(2+) serves as cofactor. Requires Ni(2+) as cofactor.

The enzyme catalyses a tRNA precursor + 2 CTP + ATP = a tRNA with a 3' CCA end + 3 diphosphate. The catalysed reaction is a tRNA with a 3' CCA end + 2 CTP + ATP = a tRNA with a 3' CCACCA end + 3 diphosphate. Catalyzes the addition and repair of the essential 3'-terminal CCA sequence in tRNAs without using a nucleic acid template. Adds these three nucleotides in the order of C, C, and A to the tRNA nucleotide-73, using CTP and ATP as substrates and producing inorganic pyrophosphate. tRNA 3'-terminal CCA addition is required both for tRNA processing and repair. Also involved in tRNA surveillance by mediating tandem CCA addition to generate a CCACCA at the 3' terminus of unstable tRNAs. While stable tRNAs receive only 3'-terminal CCA, unstable tRNAs are marked with CCACCA and rapidly degraded. In Dechloromonas aromatica (strain RCB), this protein is Multifunctional CCA protein.